Reading from the N-terminus, the 147-residue chain is Hemoglobin subunit beta-1/2 (147 aa).

Val-2 carries the post-translational modification N-acetylvaline. Residues 3-147 form the Globin domain; the sequence is HLSSEEKSAV…VANALAHKYH (145 aa). Thr-13 carries the post-translational modification Phosphothreonine. Residue Ser-45 is modified to Phosphoserine. The residue at position 60 (Lys-60) is an N6-acetyllysine. His-64 serves as a coordination point for heme b. Lys-83 carries the post-translational modification N6-acetyllysine. His-93 lines the heme b pocket. The residue at position 94 (Cys-94) is an S-nitrosocysteine. N6-acetyllysine is present on Lys-145.

This sequence belongs to the globin family. In terms of assembly, heterotetramer of two alpha chains and two beta chains. In terms of tissue distribution, red blood cells.

Its function is as follows. Involved in oxygen transport from the lung to the various peripheral tissues. This Oryctolagus cuniculus (Rabbit) protein is Hemoglobin subunit beta-1/2 (HBB1).